Consider the following 206-residue polypeptide: Large ribosomal subunit protein eL8 (206 aa).

Belongs to the eukaryotic ribosomal protein eL8 family. In terms of assembly, component of the large ribosomal subunit.

Its subcellular location is the cytoplasm. The protein is Large ribosomal subunit protein eL8 (RPL7A) of Encephalitozoon cuniculi (strain GB-M1) (Microsporidian parasite).